Here is a 209-residue protein sequence, read N- to C-terminus: Protein GrpE (209 aa).

Residues 1 to 13 are compositionally biased toward polar residues; that stretch reads MSNDSSKAKQNQV. A disordered region spans residues 1 to 27; the sequence is MSNDSSKAKQNQVDEAVEGEIITDNEN. Residues 15–27 are compositionally biased toward acidic residues; the sequence is EAVEGEIITDNEN.

Belongs to the GrpE family. In terms of assembly, homodimer.

It is found in the cytoplasm. Its function is as follows. Participates actively in the response to hyperosmotic and heat shock by preventing the aggregation of stress-denatured proteins, in association with DnaK and GrpE. It is the nucleotide exchange factor for DnaK and may function as a thermosensor. Unfolded proteins bind initially to DnaJ; upon interaction with the DnaJ-bound protein, DnaK hydrolyzes its bound ATP, resulting in the formation of a stable complex. GrpE releases ADP from DnaK; ATP binding to DnaK triggers the release of the substrate protein, thus completing the reaction cycle. Several rounds of ATP-dependent interactions between DnaJ, DnaK and GrpE are required for fully efficient folding. This chain is Protein GrpE, found in Shewanella sediminis (strain HAW-EB3).